We begin with the raw amino-acid sequence, 344 residues long: Arginine N-succinyltransferase (344 aa).

Leu125 is a succinyl-CoA binding site. The active-site Proton donor is the His229.

The protein belongs to the arginine N-succinyltransferase family.

The catalysed reaction is succinyl-CoA + L-arginine = N(2)-succinyl-L-arginine + CoA + H(+). The protein operates within amino-acid degradation; L-arginine degradation via AST pathway; L-glutamate and succinate from L-arginine: step 1/5. Functionally, catalyzes the transfer of succinyl-CoA to arginine to produce N(2)-succinylarginine. This chain is Arginine N-succinyltransferase, found in Shigella flexneri serotype 5b (strain 8401).